Consider the following 304-residue polypeptide: Acetyl-coenzyme A carboxylase carboxyl transferase subunit beta (304 aa).

The region spanning 25–294 (VWTKCDSCGQ…PSVVESKADT (270 aa)) is the CoA carboxyltransferase N-terminal domain. 4 residues coordinate Zn(2+): C29, C32, C48, and C51. The segment at 29-51 (CDSCGQVLYRAELERNLEVCPKC) adopts a C4-type zinc-finger fold.

Belongs to the AccD/PCCB family. In terms of assembly, acetyl-CoA carboxylase is a heterohexamer composed of biotin carboxyl carrier protein (AccB), biotin carboxylase (AccC) and two subunits each of ACCase subunit alpha (AccA) and ACCase subunit beta (AccD). Requires Zn(2+) as cofactor.

The protein resides in the cytoplasm. The enzyme catalyses N(6)-carboxybiotinyl-L-lysyl-[protein] + acetyl-CoA = N(6)-biotinyl-L-lysyl-[protein] + malonyl-CoA. The protein operates within lipid metabolism; malonyl-CoA biosynthesis; malonyl-CoA from acetyl-CoA: step 1/1. Functionally, component of the acetyl coenzyme A carboxylase (ACC) complex. Biotin carboxylase (BC) catalyzes the carboxylation of biotin on its carrier protein (BCCP) and then the CO(2) group is transferred by the transcarboxylase to acetyl-CoA to form malonyl-CoA. The sequence is that of Acetyl-coenzyme A carboxylase carboxyl transferase subunit beta from Yersinia pestis bv. Antiqua (strain Nepal516).